Here is a 74-residue protein sequence, read N- to C-terminus: MSCCGGSCGCGSGCKCGSGCGGCGMYPDLEKSTTFTIIQGVAPMNNFEELGEKAAEGGNGCKCGSNCTCDPCNC.

This sequence belongs to the metallothionein superfamily. Type 15 family.

In terms of biological role, metallothioneins have a high content of cysteine residues that bind various heavy metals. The chain is Metallothionein-like protein type 2 from Nicotiana plumbaginifolia (Leadwort-leaved tobacco).